We begin with the raw amino-acid sequence, 447 residues long: N-succinylarginine dihydrolase (447 aa).

Substrate-binding positions include 19–28 (AGLSFGNEAS), asparagine 110, and 137–138 (HR). Glutamate 174 is a catalytic residue. Residue arginine 212 coordinates substrate. Histidine 248 is an active-site residue. Aspartate 250 and asparagine 359 together coordinate substrate. Catalysis depends on cysteine 365, which acts as the Nucleophile.

It belongs to the succinylarginine dihydrolase family. In terms of assembly, homodimer.

The enzyme catalyses N(2)-succinyl-L-arginine + 2 H2O + 2 H(+) = N(2)-succinyl-L-ornithine + 2 NH4(+) + CO2. It participates in amino-acid degradation; L-arginine degradation via AST pathway; L-glutamate and succinate from L-arginine: step 2/5. Its function is as follows. Catalyzes the hydrolysis of N(2)-succinylarginine into N(2)-succinylornithine, ammonia and CO(2). The chain is N-succinylarginine dihydrolase from Escherichia coli O139:H28 (strain E24377A / ETEC).